Consider the following 160-residue polypeptide: Putative pre-16S rRNA nuclease (160 aa).

The protein belongs to the YqgF nuclease family.

It localises to the cytoplasm. Functionally, could be a nuclease involved in processing of the 5'-end of pre-16S rRNA. The polypeptide is Putative pre-16S rRNA nuclease (Rhodopseudomonas palustris (strain HaA2)).